We begin with the raw amino-acid sequence, 341 residues long: Heme A synthase (341 aa).

A run of 8 helical transmembrane segments spans residues 8–28 (VIIWLLSGCVLLFLMVVVGGI), 92–112 (FHRFIGRIIGLVFFVPFVYFL), 126–146 (IVLLAMGAFQGFLGWFMVRSG), 160–180 (LHLTFAFITFAYTLWVALDLI), 201–221 (AALLIQIIYGGFVAGLNAGLI), 256–276 (VQFVHRTFAYAVVAVILFLFF), 294–314 (LVVFVFIQFLLGVFTLLYSVP), and 315–335 (LALGLIHQIMAFFLLSAMTYT). His-260 lines the heme pocket. Heme is bound at residue His-321.

This sequence belongs to the COX15/CtaA family. Type 2 subfamily. In terms of assembly, interacts with CtaB. Heme b is required as a cofactor.

It is found in the cell membrane. It catalyses the reaction Fe(II)-heme o + 2 A + H2O = Fe(II)-heme a + 2 AH2. It participates in porphyrin-containing compound metabolism; heme A biosynthesis; heme A from heme O: step 1/1. Functionally, catalyzes the conversion of heme O to heme A by two successive hydroxylations of the methyl group at C8. The first hydroxylation forms heme I, the second hydroxylation results in an unstable dihydroxymethyl group, which spontaneously dehydrates, resulting in the formyl group of heme A. This chain is Heme A synthase, found in Flavobacterium johnsoniae (strain ATCC 17061 / DSM 2064 / JCM 8514 / BCRC 14874 / CCUG 350202 / NBRC 14942 / NCIMB 11054 / UW101) (Cytophaga johnsonae).